Consider the following 90-residue polypeptide: Small ribosomal subunit protein uS15 (90 aa).

Belongs to the universal ribosomal protein uS15 family. In terms of assembly, part of the 30S ribosomal subunit. Forms a bridge to the 50S subunit in the 70S ribosome, contacting the 23S rRNA.

One of the primary rRNA binding proteins, it binds directly to 16S rRNA where it helps nucleate assembly of the platform of the 30S subunit by binding and bridging several RNA helices of the 16S rRNA. In terms of biological role, forms an intersubunit bridge (bridge B4) with the 23S rRNA of the 50S subunit in the ribosome. The protein is Small ribosomal subunit protein uS15 of Aliarcobacter butzleri (strain RM4018) (Arcobacter butzleri).